We begin with the raw amino-acid sequence, 198 residues long: Elongation factor Ts (198 aa).

Residues 81–84 form an involved in Mg(2+) ion dislocation from EF-Tu region; sequence TDFV.

The protein belongs to the EF-Ts family.

Its subcellular location is the cytoplasm. Its function is as follows. Associates with the EF-Tu.GDP complex and induces the exchange of GDP to GTP. It remains bound to the aminoacyl-tRNA.EF-Tu.GTP complex up to the GTP hydrolysis stage on the ribosome. The sequence is that of Elongation factor Ts from Herpetosiphon aurantiacus (strain ATCC 23779 / DSM 785 / 114-95).